A 261-amino-acid chain; its full sequence is Acetylglutamate kinase (261 aa).

Substrate contacts are provided by residues glycine 46–glycine 47, arginine 68, and asparagine 160.

It belongs to the acetylglutamate kinase family. ArgB subfamily.

It is found in the cytoplasm. The enzyme catalyses N-acetyl-L-glutamate + ATP = N-acetyl-L-glutamyl 5-phosphate + ADP. It participates in amino-acid biosynthesis; L-arginine biosynthesis; N(2)-acetyl-L-ornithine from L-glutamate: step 2/4. Its function is as follows. Catalyzes the ATP-dependent phosphorylation of N-acetyl-L-glutamate. The polypeptide is Acetylglutamate kinase (Shewanella loihica (strain ATCC BAA-1088 / PV-4)).